Consider the following 391-residue polypeptide: Probable acridone synthase 4 (391 aa).

Residue cysteine 164 is part of the active site.

This sequence belongs to the thiolase-like superfamily. Chalcone/stilbene synthases family.

The catalysed reaction is N-methylanthraniloyl-CoA + 3 malonyl-CoA + 3 H(+) = 1,3-dihydroxy-N-methylacridone + 3 CO2 + 4 CoA + H2O. The chain is Probable acridone synthase 4 (ACS4) from Ruta graveolens (Common rue).